Here is a 212-residue protein sequence, read N- to C-terminus: Interleukin-6 (212 aa).

The N-terminal stretch at 1–29 is a signal peptide; sequence MTSFSTSAFRPVAFSLGLLLVMPAAFPAP. C72 and C78 are disulfide-bonded. N73 is a glycosylation site (N-linked (GlcNAc...) asparagine). S81 bears the Phosphoserine mark. The cysteines at positions 101 and 111 are disulfide-linked. 2 N-linked (GlcNAc...) asparagine glycosylation sites follow: N160 and N172.

It belongs to the IL-6 superfamily. As to quaternary structure, component of a hexamer of two molecules each of IL6, IL6R and IL6ST; first binds to IL6R to associate with the signaling subunit IL6ST. Interacts with IL6R (via the N-terminal ectodomain); this interaction may be affected by IL6R-binding with SORL1, hence decreasing IL6 cis signaling. Interacts with SORL1 (via the N-terminal ectodomain); this interaction leads to IL6 internalization and lysosomal degradation. May form a trimeric complex with the soluble SORL1 ectodomain and soluble IL6R receptor; this interaction might stabilize circulating IL6, hence promoting IL6 trans signaling.

It is found in the secreted. Functionally, cytokine with a wide variety of biological functions in immunity, tissue regeneration, and metabolism. Binds to IL6R, then the complex associates to the signaling subunit IL6ST/gp130 to trigger the intracellular IL6-signaling pathway. The interaction with the membrane-bound IL6R and IL6ST stimulates 'classic signaling', whereas the binding of IL6 and soluble IL6R to IL6ST stimulates 'trans-signaling'. Alternatively, 'cluster signaling' occurs when membrane-bound IL6:IL6R complexes on transmitter cells activate IL6ST receptors on neighboring receiver cells. Its function is as follows. IL6 is a potent inducer of the acute phase response. Rapid production of IL6 contributes to host defense during infection and tissue injury, but excessive IL6 synthesis is involved in disease pathology. In the innate immune response, is synthesized by myeloid cells, such as macrophages and dendritic cells, upon recognition of pathogens through toll-like receptors (TLRs) at the site of infection or tissue injury. In the adaptive immune response, is required for the differentiation of B cells into immunoglobulin-secreting cells. Plays a major role in the differentiation of CD4(+) T cell subsets. Essential factor for the development of T follicular helper (Tfh) cells that are required for the induction of germinal-center formation. Required to drive naive CD4(+) T cells to the Th17 lineage. Also required for proliferation of myeloma cells and the survival of plasmablast cells. In terms of biological role, acts as an essential factor in bone homeostasis and on vessels directly or indirectly by induction of VEGF, resulting in increased angiogenesis activity and vascular permeability. Induces, through 'trans-signaling' and synergistically with IL1B and TNF, the production of VEGF. Involved in metabolic controls, is discharged into the bloodstream after muscle contraction increasing lipolysis and improving insulin resistance. 'Trans-signaling' in central nervous system also regulates energy and glucose homeostasis. Mediates, through GLP-1, crosstalk between insulin-sensitive tissues, intestinal L cells and pancreatic islets to adapt to changes in insulin demand. Also acts as a myokine. Plays a protective role during liver injury, being required for maintenance of tissue regeneration. Also has a pivotal role in iron metabolism by regulating HAMP/hepcidin expression upon inflammation or bacterial infection. Through activation of IL6ST-YAP-NOTCH pathway, induces inflammation-induced epithelial regeneration. This is Interleukin-6 (IL6) from Saimiri sciureus (Common squirrel monkey).